A 345-amino-acid chain; its full sequence is Guanine nucleotide-binding protein alpha-4 subunit (345 aa).

A G-alpha domain is found at 30 to 345 (KDVKLLLLGP…TILSQALEHF (316 aa)). Residues 33 to 46 (KLLLLGPGESGKST) are G1 motif. Residues 38–45 (GPGESGKS), 171–177 (LRCRVRT), 196–200 (DVGGQ), 265–268 (NKKD), and Ala320 contribute to the GTP site. Mg(2+) is bound by residues Ser45 and Thr177. The tract at residues 169 to 177 (DVLRCRVRT) is G2 motif. The tract at residues 192 to 201 (LKIVDVGGQR) is G3 motif. Residues 261–268 (VLFLNKKD) are G4 motif. The tract at residues 318 to 323 (TCAVDT) is G5 motif.

This sequence belongs to the G-alpha family. G proteins are composed of 3 units; alpha, beta and gamma. The alpha chain contains the guanine nucleotide binding site.

Guanine nucleotide-binding proteins (G proteins) are involved as modulators or transducers in various transmembrane signaling systems. G alpha-4 plays a role in morphogenesis of the multicellular structure. The protein is Guanine nucleotide-binding protein alpha-4 subunit (gpaD) of Dictyostelium discoideum (Social amoeba).